The following is a 462-amino-acid chain: Cytochrome b558/566 subunit A (462 aa).

Residues 1–8 (MSLKIKSK) are Cytoplasmic-facing. A helical transmembrane segment spans residues 9-26 (ITIGVLLIIFLLSIIFTL). Topologically, residues 27-431 (ENVSLAQTSP…TSTSPVTTIS (405 aa)) are extracellular. Residues N28, N65, N91, N121, N144, N164, N174, N183, N211, N278, N279, N293, N316, N339, N353, and N376 are each glycosylated (N-linked (GlcNAc...) asparagine). A helical transmembrane segment spans residues 432 to 456 (SAIPPVTLYVTIIGVVVALVALVIL). The Cytoplasmic portion of the chain corresponds to 457–462 (YVVFRR).

Heme serves as cofactor. N-glycosylated on at least seven Asn residues by identical hexasaccharide units composed of Man, GlcNAc, Glc and 6-deoxy-6-sulfoglucose residues in the molar ration of 2:2:1:1. Post-translationally, O-glycosylated on probably as many as 35 positions by single Man residues.

The protein resides in the cell membrane. Its function is as follows. Monoheme cytochrome whose physiological function is not yet clear. The sequence is that of Cytochrome b558/566 subunit A (cbsA) from Sulfolobus acidocaldarius (strain ATCC 33909 / DSM 639 / JCM 8929 / NBRC 15157 / NCIMB 11770).